A 1343-amino-acid polypeptide reads, in one-letter code: MSQEYTEDKDVTLTKLSSGRRLLEALLILIALFAVWLMAALLSFNPSDPSWSQTAWHEPIHNLGGAPGAWLADTLFFIFGVMAYTIPVIIVGGCWFAWRHQSTDDYIDYFAVSLRLIGVLALILTSCGLAAINADDIWYFASGGVIGSLLSTTLQPLLHSSGGTIMLLCIWAAGLTLFTGWSWVSIAEKLGGWLLNILTFASNRTRRDDTWVDDEEYDDEYDEETDGVQRESRRARILRGALARRKRLAEKFSNPRGRQTDAALFSGKRMDDDEDIQYSARGVAADPDDVLFSGNRATQSEYDEYDPLLNGHSVTEPVAAAAAATAVTQTWAASADPIMQTPPMPGAEPVVAQPTVEWQPVPGPQTGEPVIAPAPEGYQPHPQYAQPQEAQSAPWQQPVPVASAPQYAATPATAAEYDSLAPQETQPQWQAPDAEQHWQPEPIAAEPSHMPPPVIEQPVATEPEPGIEETRPARPPLYYFEEVEEKRAREREQLAAWYQPIPEPVKENVPVKPTVSVAPSIPPVEAVAAAASLDTGIKSGALAAGAAAAAPAFSLATGGAPRPQVKEGIGPQLPRPNRVRVPTRRELASYGIKLPSQRIAEEKAREAERNQYETGAQLTDEEIDAMHQDELARQFAQSQQHRYGETYQHDTQQAEDDDTAAEAELARQFAASQQQRYSGEQPAGAQPFSLDDLDFSPMKVLVDEGPHEPLFTPGVMPESTPVQQPVAPQPQYQQPVAPQPQYQQPQQPVASQPQYQQPQQPVAPQPQYQQPQQPVAPQPQYQQPQQPVAPQPQYQQPQQPVAPQPQYQQPQQPVAPQPQYQQPQQPTAPQDSLIHPLLMRNGDSRPLQRPTTPLPSLDLLTPPPSEVEPVDTFALEQMARLVEARLADFRIKADVVNYSPGPVITRFELNLAPGVKAARISNLSRDLARSLSTVAVRVVEVIPGKPYVGLELPNKKRQTVYLREVLDNAKFRENPSPLTVVLGKDIAGDPVVADLAKMPHLLVAGTTGSGKSVGVNAMILSMLYKAQPEDVRFIMIDPKMLELSVYEGIPHLLTEVVTDMKDAANALRWSVNEMERRYKLMSALGVRNLAGYNEKIAEAARMGRPIPDPYWKPGDSMDVQHPVLEKLPYIVVLVDEFADLMMTVGKKVEELIARLAQKARAAGIHLVLATQRPSVDVITGLIKANIPTRIAFTVSSKIDSRTILDQGGAESLLGMGDMLYSGPNSTMPVRVHGAFVRDQEVHAVVQDWKARGRPQYVDGITSDSESEGGGGGFDGGEELDALFDQAVNFVTQKRKASISGVQRQFRIGYNRAARIIEQMEAQGIVSAQGHNGNREVLAPPPFE.

Topologically, residues 1 to 24 (MSQEYTEDKDVTLTKLSSGRRLLE) are cytoplasmic. The chain crosses the membrane as a helical span at residues 25–44 (ALLILIALFAVWLMAALLSF). Residues 45–74 (NPSDPSWSQTAWHEPIHNLGGAPGAWLADT) lie on the Periplasmic side of the membrane. The chain crosses the membrane as a helical span at residues 75–98 (LFFIFGVMAYTIPVIIVGGCWFAW). At 99-115 (RHQSTDDYIDYFAVSLR) the chain is on the cytoplasmic side. The chain crosses the membrane as a helical span at residues 116–132 (LIGVLALILTSCGLAAI). Residues 133–162 (NADDIWYFASGGVIGSLLSTTLQPLLHSSG) lie on the Periplasmic side of the membrane. Residues 163-179 (GTIMLLCIWAAGLTLFT) traverse the membrane as a helical segment. Over 180 to 1343 (GWSWVSIAEK…REVLAPPPFE (1164 aa)) the chain is Cytoplasmic. Disordered stretches follow at residues 357–475 (EWQP…PARP), 556–586 (ATGGAPRPQVKEGIGPQLPRPNRVRVPTRRE), 600–619 (AEEKAREAERNQYETGAQLT), and 633–863 (RQFA…LTPP). Residues 385–395 (AQPQEAQSAPW) show a composition bias toward polar residues. Residues 402–415 (ASAPQYAATPATAA) are compositionally biased toward low complexity. A compositionally biased stretch (basic and acidic residues) spans 600-611 (AEEKAREAERNQ). Low complexity-rich tracts occupy residues 662–671 (EAELARQFAA), 721–830 (PVQQ…TAPQ), and 850–860 (PTTPLPSLDLL). The FtsK domain occupies 988–1201 (GDPVVADLAK…FTVSSKIDSR (214 aa)). 1008–1013 (GSGKSV) is an ATP binding site. Positions 1256–1275 (YVDGITSDSESEGGGGGFDG) are disordered.

This sequence belongs to the FtsK/SpoIIIE/SftA family. In terms of assembly, homohexamer. Forms a ring that surrounds DNA.

It localises to the cell inner membrane. In terms of biological role, essential cell division protein that coordinates cell division and chromosome segregation. The N-terminus is involved in assembly of the cell-division machinery. The C-terminus functions as a DNA motor that moves dsDNA in an ATP-dependent manner towards the dif recombination site, which is located within the replication terminus region. Translocation stops specifically at Xer-dif sites, where FtsK interacts with the Xer recombinase, allowing activation of chromosome unlinking by recombination. FtsK orienting polar sequences (KOPS) guide the direction of DNA translocation. FtsK can remove proteins from DNA as it translocates, but translocation stops specifically at XerCD-dif site, thereby preventing removal of XerC and XerD from dif. The polypeptide is DNA translocase FtsK (ftsK) (Salmonella typhi).